A 226-amino-acid polypeptide reads, in one-letter code: UPF0758 protein M28_Spy0816 (226 aa).

In terms of domain architecture, MPN spans 103-225; it reads SVLTSVQVAE…YYSFREKSTL (123 aa). Positions 174, 176, and 187 each coordinate Zn(2+). A JAMM motif motif is present at residues 174-187; it reads HNHPSGNIEPSSND.

Belongs to the UPF0758 family.

This is UPF0758 protein M28_Spy0816 from Streptococcus pyogenes serotype M28 (strain MGAS6180).